The sequence spans 244 residues: Acetoacetate decarboxylase (244 aa).

The active-site Schiff-base intermediate with acetoacetate is lysine 115.

The protein belongs to the ADC family. In terms of assembly, homododecamer.

It catalyses the reaction acetoacetate + H(+) = acetone + CO2. Catalyzes the conversion of acetoacetate to acetone and carbon dioxide. This chain is Acetoacetate decarboxylase, found in Clostridium acetobutylicum (strain ATCC 824 / DSM 792 / JCM 1419 / IAM 19013 / LMG 5710 / NBRC 13948 / NRRL B-527 / VKM B-1787 / 2291 / W).